The sequence spans 142 residues: Dromaiocalcin-1 (142 aa).

3 cysteine pairs are disulfide-bonded: Cys-13-Cys-24, Cys-41-Cys-138, and Cys-113-Cys-130. One can recognise a C-type lectin domain in the interval 20–139 (FRGNCYGYFR…CGERNAFICK (120 aa)).

It is found in the secreted. The protein localises to the extracellular space. The protein resides in the extracellular matrix. In Dromaius novaehollandiae (Emu), this protein is Dromaiocalcin-1.